Here is a 126-residue protein sequence, read N- to C-terminus: Small ribosomal subunit protein bS6 (126 aa).

The interval 104-126 is disordered; sequence QGAEKGKSSSKKVAAEAEASEEA.

Belongs to the bacterial ribosomal protein bS6 family.

In terms of biological role, binds together with bS18 to 16S ribosomal RNA. The protein is Small ribosomal subunit protein bS6 of Coxiella burnetii (strain Dugway 5J108-111).